Here is a 170-residue protein sequence, read N- to C-terminus: Crossover junction endodeoxyribonuclease RuvC (170 aa).

Catalysis depends on residues aspartate 9, glutamate 70, and aspartate 145. Positions 9, 70, and 145 each coordinate Mg(2+).

This sequence belongs to the RuvC family. Homodimer which binds Holliday junction (HJ) DNA. The HJ becomes 2-fold symmetrical on binding to RuvC with unstacked arms; it has a different conformation from HJ DNA in complex with RuvA. In the full resolvosome a probable DNA-RuvA(4)-RuvB(12)-RuvC(2) complex forms which resolves the HJ. Mg(2+) is required as a cofactor.

It localises to the cytoplasm. It carries out the reaction Endonucleolytic cleavage at a junction such as a reciprocal single-stranded crossover between two homologous DNA duplexes (Holliday junction).. The RuvA-RuvB-RuvC complex processes Holliday junction (HJ) DNA during genetic recombination and DNA repair. Endonuclease that resolves HJ intermediates. Cleaves cruciform DNA by making single-stranded nicks across the HJ at symmetrical positions within the homologous arms, yielding a 5'-phosphate and a 3'-hydroxyl group; requires a central core of homology in the junction. The consensus cleavage sequence is 5'-(A/T)TT(C/G)-3'. Cleavage occurs on the 3'-side of the TT dinucleotide at the point of strand exchange. HJ branch migration catalyzed by RuvA-RuvB allows RuvC to scan DNA until it finds its consensus sequence, where it cleaves and resolves the cruciform DNA. In Chlamydia trachomatis serovar L2 (strain ATCC VR-902B / DSM 19102 / 434/Bu), this protein is Crossover junction endodeoxyribonuclease RuvC.